Consider the following 410-residue polypeptide: LL-diaminopimelate aminotransferase (410 aa).

Residues tyrosine 15 and glycine 42 each coordinate substrate. Pyridoxal 5'-phosphate is bound by residues tyrosine 72, 108–109, tyrosine 132, asparagine 187, tyrosine 218, and 246–248; these read SK and SFS. Substrate-binding residues include lysine 109, tyrosine 132, and asparagine 187. Position 249 is an N6-(pyridoxal phosphate)lysine (lysine 249). Arginine 257 and asparagine 292 together coordinate pyridoxal 5'-phosphate. Positions 292 and 388 each coordinate substrate.

It belongs to the class-I pyridoxal-phosphate-dependent aminotransferase family. LL-diaminopimelate aminotransferase subfamily. Homodimer. Requires pyridoxal 5'-phosphate as cofactor.

It catalyses the reaction (2S,6S)-2,6-diaminopimelate + 2-oxoglutarate = (S)-2,3,4,5-tetrahydrodipicolinate + L-glutamate + H2O + H(+). The protein operates within amino-acid biosynthesis; L-lysine biosynthesis via DAP pathway; LL-2,6-diaminopimelate from (S)-tetrahydrodipicolinate (aminotransferase route): step 1/1. Involved in the synthesis of meso-diaminopimelate (m-DAP or DL-DAP), required for both lysine and peptidoglycan biosynthesis. Catalyzes the direct conversion of tetrahydrodipicolinate to LL-diaminopimelate. This chain is LL-diaminopimelate aminotransferase, found in Geotalea daltonii (strain DSM 22248 / JCM 15807 / FRC-32) (Geobacter daltonii).